The sequence spans 467 residues: Cruzipain (467 aa).

An N-terminal signal peptide occupies residues methionine 1–alanine 18. Residues cysteine 19–glycine 122 constitute a propeptide, activation peptide. Intrachain disulfides connect cysteine 144–cysteine 185, cysteine 178–cysteine 223, and cysteine 277–cysteine 325. Cysteine 147 is an active-site residue. Asparagine 169 carries N-linked (GlcNAc...) asparagine glycosylation. The active site involves histidine 284. Residue asparagine 292 is glycosylated (N-linked (GlcNAc...) asparagine). The active site involves asparagine 304. The tract at residues serine 333–glycine 355 is disordered. Residues proline 345–proline 354 show a composition bias toward low complexity. The N-linked (GlcNAc...) asparagine glycan is linked to asparagine 377.

It belongs to the peptidase C1 family.

The enzyme catalyses Broad endopeptidase specificity similar to that of cathepsin L.. With respect to regulation, strongly inhibited by E-64 (L-trans-epoxysuccinylleucylamido(4-guanidino)butane), Leupeptin, and N-alpha-p-tosyl-L-lysine chloromethyl ketone. In terms of biological role, hydrolyzes chromogenic peptides at the carboxyl Arg or Lys; requires at least one more amino acid, preferably Arg, Phe, Val or Leu, between the terminal Arg or Lys and the amino-blocking group. Its function is as follows. The cysteine protease may play an important role in the development and differentiation of the parasites at several stages of their life cycle. This Trypanosoma cruzi protein is Cruzipain.